A 258-amino-acid polypeptide reads, in one-letter code: Global transcriptional regulator CodY (258 aa).

The tract at residues 1-156 (MSILLNKTRK…SATIVGLEIL (156 aa)) is GAF domain. Residues 204 to 223 (ASKIADKVGITRSVIVNALR) constitute a DNA-binding region (H-T-H motif).

This sequence belongs to the CodY family.

Its subcellular location is the cytoplasm. Its function is as follows. DNA-binding global transcriptional regulator which is involved in the adaptive response to starvation and acts by directly or indirectly controlling the expression of numerous genes in response to nutrient availability. During rapid exponential growth, CodY is highly active and represses genes whose products allow adaptation to nutrient depletion. This Clostridium acetobutylicum (strain ATCC 824 / DSM 792 / JCM 1419 / IAM 19013 / LMG 5710 / NBRC 13948 / NRRL B-527 / VKM B-1787 / 2291 / W) protein is Global transcriptional regulator CodY.